Consider the following 177-residue polypeptide: Large ribosomal subunit protein uL6 (177 aa).

Belongs to the universal ribosomal protein uL6 family. As to quaternary structure, part of the 50S ribosomal subunit.

Functionally, this protein binds to the 23S rRNA, and is important in its secondary structure. It is located near the subunit interface in the base of the L7/L12 stalk, and near the tRNA binding site of the peptidyltransferase center. The polypeptide is Large ribosomal subunit protein uL6 (Rhodopseudomonas palustris (strain BisB18)).